The chain runs to 500 residues: Protein-cysteine N-palmitoyltransferase Rasp (500 aa).

The next 10 membrane-spanning stretches (helical) occupy residues 15–35 (IFVY…KIYG), 73–93 (GDFI…QGFI), 105–125 (FIGV…MVLL), 134–154 (IVSL…WILC), 206–226 (SLVQ…GPII), 243–263 (LGFV…QCAL), 293–313 (FMGQ…IAFA), 372–392 (LTFA…IWSI), 429–449 (LYAM…VYFI), and 461–481 (GAYL…YCFF). The active site involves His381.

This sequence belongs to the membrane-bound acyltransferase family. HHAT subfamily.

It is found in the membrane. The enzyme catalyses N-terminal L-cysteinyl-[protein] + hexadecanoyl-CoA = N-terminal N-hexadecanoyl-L-cysteinyl-[protein] + CoA + H(+). The catalysed reaction is N-terminal L-cysteinyl-[protein]-C-terminal glycyl cholesterol ester + hexadecanoyl-CoA = N-terminal N-hexadecanoyl-L-cysteinyl-[protein]-C-terminal glycyl cholesterol ester + CoA + H(+). Its function is as follows. Required in hedgehog (hh) expressing cells for production of appropriate signaling activity in embryos and in the imaginal precursors of adult tissues. Acts within the secretory pathway to catalyze N-terminal palmitoylation of Hh; this lipid modification is required for the embryonic and larval patterning activities of the Hh signal. Not required for Wg signaling. The protein is Protein-cysteine N-palmitoyltransferase Rasp (rasp) of Drosophila melanogaster (Fruit fly).